The following is a 551-amino-acid chain: Dihydroxy-acid dehydratase (551 aa).

Asp78 lines the Mg(2+) pocket. Cys119 is a [2Fe-2S] cluster binding site. Mg(2+)-binding residues include Asp120 and Lys121. The residue at position 121 (Lys121) is an N6-carboxylysine. Cys191 is a [2Fe-2S] cluster binding site. Glu441 contributes to the Mg(2+) binding site. The active-site Proton acceptor is the Ser467.

The protein belongs to the IlvD/Edd family. As to quaternary structure, homodimer. Requires [2Fe-2S] cluster as cofactor. The cofactor is Mg(2+).

The catalysed reaction is (2R)-2,3-dihydroxy-3-methylbutanoate = 3-methyl-2-oxobutanoate + H2O. It carries out the reaction (2R,3R)-2,3-dihydroxy-3-methylpentanoate = (S)-3-methyl-2-oxopentanoate + H2O. It functions in the pathway amino-acid biosynthesis; L-isoleucine biosynthesis; L-isoleucine from 2-oxobutanoate: step 3/4. Its pathway is amino-acid biosynthesis; L-valine biosynthesis; L-valine from pyruvate: step 3/4. In terms of biological role, functions in the biosynthesis of branched-chain amino acids. Catalyzes the dehydration of (2R,3R)-2,3-dihydroxy-3-methylpentanoate (2,3-dihydroxy-3-methylvalerate) into 2-oxo-3-methylpentanoate (2-oxo-3-methylvalerate) and of (2R)-2,3-dihydroxy-3-methylbutanoate (2,3-dihydroxyisovalerate) into 2-oxo-3-methylbutanoate (2-oxoisovalerate), the penultimate precursor to L-isoleucine and L-valine, respectively. This Pyrococcus furiosus (strain ATCC 43587 / DSM 3638 / JCM 8422 / Vc1) protein is Dihydroxy-acid dehydratase.